A 715-amino-acid chain; its full sequence is SANT and BTB domain regulator of class switch recombination (715 aa).

An SANT domain is found at 21-59 (DMILCSLVGVPQPISWDSVARLVPGYTPKECAKRFEELK). The 109-residue stretch at 146-254 (MVIHVCDEAK…ECIRYCHKNM (109 aa)) folds into the BTB domain. Positions 552–573 (SEEEDYTTGSEVTEDEVGDEEE) are enriched in acidic residues. 2 disordered regions span residues 552 to 623 (SEEE…VSLQ) and 689 to 715 (SAHSNTRQMNTEKIPRPKPRFGTGRPT). The span at 578 to 605 (QAGRKVKPKRSAKQTKKHISSPSIHKKE) shows a compositional bias: basic residues. Composition is skewed to polar residues over residues 614–623 (DSSPFTVSLQ) and 690–699 (AHSNTRQMNT).

Belongs to the KIAA1841 family. Homodimer.

In terms of biological role, negatively regulates class switch recombination or isotype switching in splenic B-cells. This chain is SANT and BTB domain regulator of class switch recombination, found in Xenopus laevis (African clawed frog).